A 310-amino-acid polypeptide reads, in one-letter code: Malate dehydrogenase (310 aa).

NAD(+) contacts are provided by residues 7–12 (GAGNVG) and D32. Residues R81 and R87 each coordinate substrate. Residues N94 and 117–119 (VSN) each bind NAD(+). Substrate is bound by residues N119 and R150. The Proton acceptor role is filled by H174.

This sequence belongs to the LDH/MDH superfamily. MDH type 3 family.

It carries out the reaction (S)-malate + NAD(+) = oxaloacetate + NADH + H(+). Its function is as follows. Catalyzes the reversible oxidation of malate to oxaloacetate. This Pelodictyon phaeoclathratiforme (strain DSM 5477 / BU-1) protein is Malate dehydrogenase.